Reading from the N-terminus, the 1061-residue chain is Protein pid-5 (1061 aa).

This sequence belongs to the peptidase M24B family. As to quaternary structure, may interact with pid-2, app-1 and prmt-5.

Its subcellular location is the cytoplasm. The protein localises to the perinuclear region. It localises to the P-body. Functionally, together with pid-4, it is involved in gene silencing mediated by a class of 21 nucleotide PIWI-interacting RNAs (piRNAs) that possess a uracil residue at the 5'-end (also called 21U-RNAs) and guide the Piwi protein prg-1 to its DNA targets for silencing. Together with pid-4, it is required for the biogenesis of secondary and tertiary 22G-siRNAs. Specifically, promotes the production of 22G-siRNAs from the 5' end of target mRNAs. Together with pid-4, plays a role in small RNA-directed transgenerational epigenetic inheritance (also called RNAe) over several generations and germline immortality. Together with pid-4, plays a role in the formation of liquid-like condensates in the cytoplasm called Z granules. This Caenorhabditis elegans protein is Protein pid-5.